Reading from the N-terminus, the 389-residue chain is uncharacterized protein (389 aa).

Residues methionine 1–alanine 23 form the signal peptide.

Belongs to the IUNH family.

The protein localises to the endoplasmic reticulum lumen. This is an uncharacterized protein from Schizosaccharomyces pombe (strain 972 / ATCC 24843) (Fission yeast).